A 206-amino-acid polypeptide reads, in one-letter code: Musculin (206 aa).

A disordered region spans residues 1 to 115 (MSTGSVSDPE…QSQRNAANAR (115 aa)). Residues 46–56 (SAEEEDPDGEE) show a composition bias toward acidic residues. The short motif at 71 to 76 (KRKRPR) is the Nuclear localization signal element. Residues 78-92 (AGGGGAGGSAGGGGK) are compositionally biased toward gly residues. The segment covering 93–102 (KPLPAKGSAA) has biased composition (low complexity). Residues 107-159 (SQRNAANARERARMRVLSKAFSRLKTSLPWVPPDTKLSKLDTLRLASSYIAHL) form the bHLH domain.

In terms of assembly, efficient DNA binding requires dimerization with another bHLH protein. Binds DNA as a homodimer or a heterodimer. Forms a heterodimer with TCF3. In terms of tissue distribution, expressed in lymphoid tissues, B-cell lines and activated B-cells.

The protein resides in the nucleus. Transcription repressor capable of inhibiting the transactivation capability of TCF3/E47. May play a role in regulating antigen-dependent B-cell differentiation. The sequence is that of Musculin (MSC) from Homo sapiens (Human).